An 823-amino-acid chain; its full sequence is MMSLLPNPDPITVPLVLKLCSFPPPRRLFSLRLRRFTRKSSSLLPLVAVSSLSATAAKPTRWREKPELAESDSISLLNERIRRDLGKRETARPAMDSEEAEKYIHMVKEQQERGLQKLKGIRQGTKAAGDGAFSYKVDPYSLLSGDYVVHKKVGIGRFVGIKFDVPKDSSEPLEYVFIEYADGMAKLPLKQASRLLYRYNLPNETKRPRTLSRLSDTSVWERRKTKGKVAIQKMVVDLMELYLHRLRQKRYPYPKNPIMADFAAQFPYNATPDQKQAFLDVEKDLTERETPMDRLICGDVGFGKTEVALRAIFCVVSTGKQAMVLAPTIVLAKQHYDVISERFSLYPHIKVGLLSRFQTKAEKEEYLEMIKTGHLNIIVGTHSLLGSRVVYSNLGLLVVDEEQRFGVKQKEKIASFKTSVDVLTLSATPIPRTLYLALTGFRDASLISTPPPERIPIKTHLSSFRKEKVIEAIKNELDRGGQVFYVLPRIKGLEEVMDFLEEAFPDIDIAMAHGKQYSKQLEETMERFAQGKIKILICTNIVESGLDIQNANTIIIQDVQQFGLAQLYQLRGRVGRADKEAHAYLFYPDKSLLSDQALERLSALEECRELGQGFQLAEKDMGIRGFGTIFGEQQTGDVGNVGIDLFFEMLFESLSKVEELRIFSVPYDLVKIDININPRLPSEYVNYLENPMEIIHEAEKAAEKDMWSLMQFTENLRRQYGKEPYSMEIILKKLYVRRMAADLGVNRIYASGKMVVMKTNMSKKVFKLITDSMTCDVYRSSLIYEGDQIMAELLLELPREQLLNWMFQCLSELHASLPALIKY.

The transit peptide at 1 to 53 (MMSLLPNPDPITVPLVLKLCSFPPPRRLFSLRLRRFTRKSSSLLPLVAVSSLS) directs the protein to the chloroplast. In terms of domain architecture, Helicase ATP-binding spans 285–447 (LTERETPMDR…LTGFRDASLI (163 aa)). 298–305 (GDVGFGKT) provides a ligand contact to ATP. The DEEQ box motif lies at 400 to 403 (DEEQ). The Helicase C-terminal domain occupies 465–622 (RKEKVIEAIK…GFQLAEKDMG (158 aa)).

The protein belongs to the helicase family.

The protein resides in the plastid. It localises to the chloroplast. It carries out the reaction ATP + H2O = ADP + phosphate + H(+). This Arabidopsis thaliana (Mouse-ear cress) protein is ATP-dependent DNA helicase At3g02060, chloroplastic.